A 542-amino-acid chain; its full sequence is ATP synthase subunit beta (542 aa).

Over residues 1–50 the composition is skewed to low complexity; it reads MAKTPAKAPAAAAKPAAVKKPAAPKAAAAPKAAAVATPAAKKPAAPKAAP. Positions 1 to 61 are disordered; sequence MAKTPAKAPA…SKVAGTREKP (61 aa). Residue 216–223 participates in ATP binding; it reads GGAGVGKT.

It belongs to the ATPase alpha/beta chains family. In terms of assembly, F-type ATPases have 2 components, CF(1) - the catalytic core - and CF(0) - the membrane proton channel. CF(1) has five subunits: alpha(3), beta(3), gamma(1), delta(1), epsilon(1). CF(0) has three main subunits: a(1), b(2) and c(9-12). The alpha and beta chains form an alternating ring which encloses part of the gamma chain. CF(1) is attached to CF(0) by a central stalk formed by the gamma and epsilon chains, while a peripheral stalk is formed by the delta and b chains.

It localises to the cell inner membrane. It carries out the reaction ATP + H2O + 4 H(+)(in) = ADP + phosphate + 5 H(+)(out). In terms of biological role, produces ATP from ADP in the presence of a proton gradient across the membrane. The catalytic sites are hosted primarily by the beta subunits. This is ATP synthase subunit beta from Caulobacter sp. (strain K31).